A 430-amino-acid polypeptide reads, in one-letter code: FAD-dependent monooxygenase asL4 (430 aa).

Residues 11–14, 33–34, Arg-108, and Tyr-278 each bind FAD; these read GGIA and ER.

Belongs to the aromatic-ring hydroxylase family. FAD is required as a cofactor.

Its pathway is secondary metabolite biosynthesis; terpenoid biosynthesis. In terms of biological role, flavin-dependent monooxygenase; part of the gene cluster that mediates the biosynthesis of xenovulene A, an unusual meroterpenoid that has potent inhibitory effects on the human gamma-aminobutyrate A (GABAA) benzodiazepine receptor. The first step of xenovulene A biosynthesis is the biosynthesis of 3-methylorcinaldehyde performed by the non-reducing polyketide synthase aspks1. The salicylate hydroxylase asL1 then catalyzes the oxidative dearomatization of 3-methylorcinaldehyde to yield a dearomatized hydroxycyclohexadione. The 2-oxoglutarate-dependent dioxygenase asL3 further catalyzes the oxidative ring expansion to provide the first tropolone metabolite. The cytochrome P450 monooxygenase asR2 allows the synthesis of tropolone hemiacetal. In parallel, a previously unrecognised class of terpene cyclase, asR6, produces alpha-humulene from farnesylpyrophosphate (FPP). The putative Diels-Alderase asR5 probably catalyzes the formation of the tropolone-humulene skeleton by linking humulene and the polyketide moiety. Oxidative-ring contractions catalyzed by asL4 and asL6 then processively remove carbon atoms from the polyketide to yield xenovulene A. The chain is FAD-dependent monooxygenase asL4 from Sarocladium schorii (Acremonium strictum (strain IMI 501407)).